Consider the following 203-residue polypeptide: Thymidylate kinase (203 aa).

Residue 7–14 (GGEGAGKT) participates in ATP binding.

The protein belongs to the thymidylate kinase family.

The catalysed reaction is dTMP + ATP = dTDP + ADP. Phosphorylation of dTMP to form dTDP in both de novo and salvage pathways of dTTP synthesis. The protein is Thymidylate kinase (tmk) of Chlamydia muridarum (strain MoPn / Nigg).